Here is a 288-residue protein sequence, read N- to C-terminus: Fe-S cluster assembly protein dre2 (288 aa).

The interval 1 to 127 (MSSSVLVLTS…LSRPNQVEAV (127 aa)) is N-terminal SAM-like domain. The linker stretch occupies residues 128 to 177 (PIKLSNKNGQSASKNKILDFLKSDKENLISGDDDQELIDEDELLDESAHD). C185, C196, C199, and C201 together coordinate [2Fe-2S] cluster. The tract at residues 185–201 (CKPEPGKKKRACKNCTC) is fe-S binding site A. C244, C247, C255, and C258 together coordinate [4Fe-4S] cluster. 2 consecutive short sequence motifs (cx2C motif) follow at residues 244–247 (CGNC) and 255–258 (CSGC). The interval 244–258 (CGNCYLGDAFRCSGC) is fe-S binding site B.

It belongs to the anamorsin family. In terms of assembly, monomer. Interacts with tah18. Interacts with tim40. Requires [2Fe-2S] cluster as cofactor. [4Fe-4S] cluster is required as a cofactor.

It localises to the cytoplasm. Its subcellular location is the mitochondrion intermembrane space. Its function is as follows. Component of the cytosolic iron-sulfur (Fe-S) protein assembly (CIA) machinery required for the maturation of extramitochondrial Fe-S proteins. Part of an electron transfer chain functioning in an early step of cytosolic Fe-S biogenesis, facilitating the de novo assembly of a [4Fe-4S] cluster on the scaffold complex cfd1-nbp35. Electrons are transferred to dre2 from NADPH via the FAD- and FMN-containing protein tah18. Tah18-dre2 are also required for the assembly of the diferric tyrosyl radical cofactor of ribonucleotide reductase (RNR), probably by providing electrons for reduction during radical cofactor maturation in the catalytic small subunit suc22. This Schizosaccharomyces pombe (strain 972 / ATCC 24843) (Fission yeast) protein is Fe-S cluster assembly protein dre2.